Here is an 81-residue protein sequence, read N- to C-terminus: Protein Vpu (81 aa).

The Extracellular segment spans residues 1–7; it reads MQSLQVL. A helical membrane pass occupies residues 8–28; that stretch reads AIVALVVATIIAIVVWTIVFI. The Cytoplasmic portion of the chain corresponds to 29–81; it reads EYRKILRQRKIDRLINRITERAEDSGNESDGDQEELSALVERGHLAPWDVDDL. The interval 50–81 is disordered; that stretch reads AEDSGNESDGDQEELSALVERGHLAPWDVDDL. 2 positions are modified to phosphoserine; by host CK2: serine 53 and serine 57. Acidic residues predominate over residues 53-63; the sequence is SGNESDGDQEE.

The protein belongs to the HIV-1 VPU protein family. In terms of assembly, homopentamer. Interacts with host CD4 and BRTC; these interactions induce proteasomal degradation of CD4. Interacts with host BST2; this interaction leads to the degradation of host BST2. Interacts with host FBXW11. Interacts with host AP1M1; this interaction plays a role in the mistrafficking and subsequent degradation of host BST2. Interacts with host RANBP2; this interaction allows Vpu to down-regulate host BLM sumoylation. Post-translationally, phosphorylated by host CK2. This phosphorylation is necessary for interaction with human BTRC and degradation of CD4.

It localises to the host membrane. With respect to regulation, ion channel activity is inhibited by hexamethylene amiloride in vitro. Its function is as follows. Enhances virion budding by targeting host CD4 and Tetherin/BST2 to proteasome degradation. Degradation of CD4 prevents any unwanted premature interactions between viral Env and its host receptor CD4 in the endoplasmic reticulum. Degradation of antiretroviral protein Tetherin/BST2 is important for virion budding, as BST2 tethers new viral particles to the host cell membrane. Mechanistically, Vpu bridges either CD4 or BST2 to BTRC, a substrate recognition subunit of the Skp1/Cullin/F-box protein E3 ubiquitin ligase, induces their ubiquitination and subsequent proteasomal degradation. The alteration of the E3 ligase specificity by Vpu seems to promote the degradation of host IKBKB, leading to NF-kappa-B down-regulation and subsequent apoptosis. Acts as a viroporin that forms an oligomeric ion channel in membranes. Modulates the host DNA repair mechanisms to promote degradation of nuclear viral cDNA in cells that are already productively infected in order to suppress immune sensing and proviral hyper-integration (superinfection). Manipulates PML-NBs and modulates SUMOylation of host BLM protein thereby enhancing its DNA-end processing activity toward viral unintegrated linear DNA. Also inhibits RAD52-mediated homologous repair of viral cDNA, preventing the generation of dead-end circular forms of single copies of the long terminal repeat and permitting sustained nucleolytic attack. The protein is Protein Vpu of Human immunodeficiency virus type 1 group M subtype B (isolate YU-2) (HIV-1).